Consider the following 616-residue polypeptide: Dihydroxy-acid dehydratase (616 aa).

Asp81 serves as a coordination point for Mg(2+). Cys122 contributes to the [2Fe-2S] cluster binding site. Residues Asp123 and Lys124 each coordinate Mg(2+). The residue at position 124 (Lys124) is an N6-carboxylysine. Position 195 (Cys195) interacts with [2Fe-2S] cluster. Residue Glu491 participates in Mg(2+) binding. Catalysis depends on Ser517, which acts as the Proton acceptor.

It belongs to the IlvD/Edd family. As to quaternary structure, homodimer. It depends on [2Fe-2S] cluster as a cofactor. Mg(2+) is required as a cofactor.

It carries out the reaction (2R)-2,3-dihydroxy-3-methylbutanoate = 3-methyl-2-oxobutanoate + H2O. The catalysed reaction is (2R,3R)-2,3-dihydroxy-3-methylpentanoate = (S)-3-methyl-2-oxopentanoate + H2O. It functions in the pathway amino-acid biosynthesis; L-isoleucine biosynthesis; L-isoleucine from 2-oxobutanoate: step 3/4. It participates in amino-acid biosynthesis; L-valine biosynthesis; L-valine from pyruvate: step 3/4. Functions in the biosynthesis of branched-chain amino acids. Catalyzes the dehydration of (2R,3R)-2,3-dihydroxy-3-methylpentanoate (2,3-dihydroxy-3-methylvalerate) into 2-oxo-3-methylpentanoate (2-oxo-3-methylvalerate) and of (2R)-2,3-dihydroxy-3-methylbutanoate (2,3-dihydroxyisovalerate) into 2-oxo-3-methylbutanoate (2-oxoisovalerate), the penultimate precursor to L-isoleucine and L-valine, respectively. The polypeptide is Dihydroxy-acid dehydratase (Salmonella schwarzengrund (strain CVM19633)).